The sequence spans 398 residues: Probable aminomethyltransferase (398 aa).

This sequence belongs to the GcvT family. The glycine cleavage system is composed of four proteins: P, T, L and H.

The catalysed reaction is N(6)-[(R)-S(8)-aminomethyldihydrolipoyl]-L-lysyl-[protein] + (6S)-5,6,7,8-tetrahydrofolate = N(6)-[(R)-dihydrolipoyl]-L-lysyl-[protein] + (6R)-5,10-methylene-5,6,7,8-tetrahydrofolate + NH4(+). The glycine cleavage system catalyzes the degradation of glycine. This is Probable aminomethyltransferase from Thermococcus gammatolerans (strain DSM 15229 / JCM 11827 / EJ3).